A 1014-amino-acid chain; its full sequence is Collagen alpha-1(I) chain (1014 aa).

A disordered region spans residues 1-1014 (SYGYDEKGGI…PGPPGPPGPP (1014 aa)). Residues 9-22 (GISVPGPMGPSGPR) are compositionally biased toward low complexity. 4-hydroxyproline is present on residues Pro25, Pro28, Pro30, Pro39, Pro42, Pro45, Pro60, Pro75, Pro81, Pro90, and Pro96. Low complexity predominate over residues 33 to 51 (QGFQGPPGEPGEPGSSGPM). Residues 63–77 (NGDDGEAGKPGRPGE) show a composition bias toward basic and acidic residues. A 5-hydroxylysine; alternate modification is found at Lys99. A glycan (O-linked (Gal...) hydroxylysine; alternate) is linked at Lys99. Ser105 carries the post-translational modification Phosphoserine. Positions 113-129 (DAGPAGPKGEPGSPGEN) are enriched in low complexity. Pro123, Pro126, Pro132, Pro141, Pro147, Pro168, Pro177, Pro180, Pro207, Pro210, Pro222, Pro228, Pro237, Pro243, Pro246, and Pro261 each carry 4-hydroxyproline. A compositionally biased stretch (low complexity) spans 147 to 165 (PGASGPAGARGNDGATGAA). Residues 167-179 (PPGPTGPAGPPGF) show a composition bias toward pro residues. The segment covering 213–252 (AGAAGPAGNPGADGQPGAKGANGAPGIAGAPGFPGARGPS) has biased composition (low complexity). 5-hydroxylysine is present on Lys264. Residues Pro270, Pro273, Pro285, Pro294, Pro309, Pro315, Pro324, and Pro330 each carry the 4-hydroxyproline modification. Over residues 319-328 (GERGGPGSRG) the composition is skewed to gly residues. The residue at position 339 (Lys339) is a 5-hydroxylysine. A 4-hydroxyproline mark is found at Pro348, Pro357, Pro363, Pro369, Pro378, Pro381, Pro390, Pro399, Pro405, Pro417, Pro426, Pro435, Pro438, Pro456, Pro473, Pro479, Pro485, Pro491, Pro497, Pro503, Pro515, Pro524, Pro535, Pro548, Pro554, and Pro563. Over residues 372-398 (KGLTGSPGSPGPDGKTGPPGPAGQDGR) the composition is skewed to low complexity. Over residues 407 to 426 (ARGQAGVMGFPGPKGAAGEP) the composition is skewed to low complexity. Over residues 485–494 (PGEAGKPGEQ) the composition is skewed to low complexity. Lys575 is subject to 5-hydroxylysine. A 4-hydroxyproline mark is found at Pro581, Pro596, and Pro602. Residues 608-622 (SGPSGPAGPTGARGA) show a composition bias toward low complexity. Ser611 carries the phosphoserine modification. 4-hydroxyproline occurs at positions 623, 629, 632, 641, 647, 674, and 683. Residues 635-665 (AGFAGPPGADGQPGAKGEPGDAGAKGDAGPS) show a composition bias toward low complexity. Lys686 carries the post-translational modification 5-hydroxylysine. The span at 691-707 (SAGPPGATGFPGAAGRV) shows a compositional bias: low complexity. 4-hydroxyproline is present on residues Pro695 and Pro701. The residue at position 709 (Pro709) is a 3-hydroxyproline. A 4-hydroxyproline mark is found at Pro710, Pro719, Pro722, Pro743, Pro752, Pro760, Pro769, Pro787, Pro796, Pro799, Pro805, Pro820, Pro826, Pro832, Pro841, and Pro847. The span at 736 to 745 (ETGPAGRPGE) shows a compositional bias: low complexity. The span at 757-769 (KGSPGADGPAGAP) shows a compositional bias: low complexity. Over residues 819 to 829 (PPGPVGPPGLA) the composition is skewed to pro residues. Lys856 is modified (5-hydroxylysine). Residues 864–879 (PGPPGAPGAPGAPGPV) show a composition bias toward pro residues. 3 positions are modified to 4-hydroxyproline: Pro867, Pro870, and Pro873. Over residues 900–914 (AGPAGARGPAGPQGP) the composition is skewed to low complexity. Residues 915-929 (RGDKGETGEQGDRGI) show a composition bias toward basic and acidic residues. Lys918 bears the 5-hydroxylysine mark. Lys930 bears the 5-hydroxylysine; alternate mark. An O-linked (Gal...) hydroxylysine; alternate glycan is attached at Lys930. 4-hydroxyproline occurs at positions 945, 948, 966, and 981. Low complexity predominate over residues 948–981 (PGEQGPSGASGPAGPRGPPGSAGSPGKDGLNGLP). 3-hydroxyproline is present on Pro986. A 4-hydroxyproline modification is found at Pro987. Positions 999-1014 (VGPPGPPGPPGPPGPP) are enriched in pro residues. Pro1001 bears the 3-hydroxyproline mark. Pro1002 is modified (4-hydroxyproline). A 3-hydroxyproline modification is found at Pro1004. Position 1005 is a 4-hydroxyproline (Pro1005). Pro1007 bears the 3-hydroxyproline mark. Residues Pro1008, Pro1011, and Pro1014 each carry the 4-hydroxyproline modification.

The protein belongs to the fibrillar collagen family. Trimers of one alpha 2(I) and two alpha 1(I) chains. Post-translationally, contains mostly 4-hydroxyproline. Proline residues at the third position of the tripeptide repeating unit (G-X-Y) are hydroxylated in some or all of the chains. In terms of processing, contains 3-hydroxyproline at a few sites. This modification occurs on the first proline residue in the sequence motif Gly-Pro-Hyp, where Hyp is 4-hydroxyproline. Lysine residues at the third position of the tripeptide repeating unit (G-X-Y) are 5-hydroxylated in some or all of the chains. Post-translationally, O-glycosylated on hydroxylated lysine residues. The O-linked glycan consists of a Glc-Gal disaccharide. As to expression, expressed in bones.

The protein resides in the secreted. It is found in the extracellular space. It localises to the extracellular matrix. Type I collagen is a member of group I collagen (fibrillar forming collagen). The polypeptide is Collagen alpha-1(I) chain (Megatherium americanum (Giant ground sloth)).